A 102-amino-acid polypeptide reads, in one-letter code: NADH-quinone oxidoreductase subunit K (102 aa).

Helical transmembrane passes span 5–25, 31–51, and 66–86; these read IMHY…GIFL, IIIL…FVAF, and FILT…VVFF.

This sequence belongs to the complex I subunit 4L family. As to quaternary structure, NDH-1 is composed of 14 different subunits. Subunits NuoA, H, J, K, L, M, N constitute the membrane sector of the complex.

It is found in the cell inner membrane. It carries out the reaction a quinone + NADH + 5 H(+)(in) = a quinol + NAD(+) + 4 H(+)(out). NDH-1 shuttles electrons from NADH, via FMN and iron-sulfur (Fe-S) centers, to quinones in the respiratory chain. The immediate electron acceptor for the enzyme in this species is believed to be ubiquinone. Couples the redox reaction to proton translocation (for every two electrons transferred, four hydrogen ions are translocated across the cytoplasmic membrane), and thus conserves the redox energy in a proton gradient. This is NADH-quinone oxidoreductase subunit K from Bartonella henselae (strain ATCC 49882 / DSM 28221 / CCUG 30454 / Houston 1) (Rochalimaea henselae).